Here is a 277-residue protein sequence, read N- to C-terminus: Protein OPG166 (277 aa).

2 N-linked (GlcNAc...) asparagine; by host glycosylation sites follow: N29 and N58. A run of 5 helical transmembrane segments spans residues 124 to 144 (TMLMFIFTGITLFLLFLEITY), 156 to 176 (GILQVFGCVIAMIELCGAFLF), 186 to 206 (IIGLLMMTLPSIFLIITKVFS), 219 to 239 (LIIYYQLAGYILTVLGLGLSL), and 247 to 267 (LLLSGLGTIMVSEHFSLLFLV).

The protein belongs to the orthopoxvirus OPG166 protein family.

The protein resides in the host membrane. Functionally, promotes, when overexpressed, the influx of extracellular Ca(2+), leading to membrane permeability and host cell necrosis. This chain is Protein OPG166 (OPG166), found in Vaccinia virus (strain Copenhagen) (VACV).